Here is a 353-residue protein sequence, read N- to C-terminus: 3-dehydroquinate synthase (353 aa).

This sequence belongs to the archaeal-type DHQ synthase family.

The enzyme catalyses 2-amino-2,3,7-trideoxy-D-lyxo-hept-6-ulosonate + NAD(+) + H2O = 3-dehydroquinate + NH4(+) + NADH + H(+). In terms of biological role, catalyzes the oxidative deamination and cyclization of 2-amino-3,7-dideoxy-D-threo-hept-6-ulosonic acid (ADH) to yield 3-dehydroquinate (DHQ), which is fed into the canonical shikimic pathway of aromatic amino acid biosynthesis. The chain is 3-dehydroquinate synthase from Nitrosopumilus maritimus (strain SCM1).